The following is a 433-amino-acid chain: L-saccharopine oxidase (433 aa).

Residues 1-18 (MSRTIVIVGCGVFGLSTA) form the signal peptide. N-linked (GlcNAc...) asparagine glycosylation is found at N24, N119, N188, and N229.

The protein belongs to the MSOX/MTOX family. Monomer. It depends on FAD as a cofactor.

The protein localises to the secreted. The protein resides in the cytoplasm. It localises to the nucleus. The enzyme catalyses L-saccharopine + O2 + H2O = (S)-2-amino-6-oxohexanoate + L-glutamate + H2O2. The sequence is that of L-saccharopine oxidase from Schizosaccharomyces pombe (strain 972 / ATCC 24843) (Fission yeast).